Consider the following 309-residue polypeptide: Foldase protein PrsA 2 (309 aa).

Residues 1-22 form the signal peptide; it reads MKQMNKLITGVVTLATVVTLSA. A lipid anchor (N-palmitoyl cysteine) is attached at cysteine 23. Cysteine 23 carries S-diacylglycerol cysteine lipidation. A PpiC domain is found at 146–241; sequence TPTMTAEIMQ…RTYHIIKVTK (96 aa).

The protein belongs to the PrsA family.

The protein resides in the cell membrane. The catalysed reaction is [protein]-peptidylproline (omega=180) = [protein]-peptidylproline (omega=0). Its function is as follows. Plays a major role in protein secretion by helping the post-translocational extracellular folding of several secreted proteins. The polypeptide is Foldase protein PrsA 2 (prsA2) (Streptococcus pyogenes serotype M3 (strain ATCC BAA-595 / MGAS315)).